Reading from the N-terminus, the 655-residue chain is Tetratricopeptide repeat protein 30 homolog (655 aa).

7 TPR repeats span residues 10–43 (EGHV…ANTR), 44–76 (AGLS…APKE), 143–176 (ADTL…GGFN), 178–210 (LVAY…GMRN), 385–418 (LAAK…YLPV), 450–484 (SIWR…HSDD), and 534–567 (CIVN…GSGN).

Belongs to the TTC30/dfy-1/fleer family.

The protein localises to the cell projection. It is found in the cilium. In terms of biological role, required for polyglutamylation of axonemal tubulin in sensory cilia. Plays a role in anterograde intraflagellar transport (IFT), the process by which cilia precursors are transported from the base of the cilium to the site of their incorporation at the tip. The polypeptide is Tetratricopeptide repeat protein 30 homolog (Drosophila melanogaster (Fruit fly)).